We begin with the raw amino-acid sequence, 289 residues long: Acetyl-coenzyme A carboxylase carboxyl transferase subunit beta (289 aa).

Residues 28 to 289 (VMTKCPKCKK…QGGEMAVWQS (262 aa)) form the CoA carboxyltransferase N-terminal domain. The Zn(2+) site is built by Cys-32, Cys-35, Cys-51, and Cys-54. Residues 32–54 (CPKCKKIMYTKEVLKNLKVCVNC) form a C4-type zinc finger.

Belongs to the AccD/PCCB family. Acetyl-CoA carboxylase is a heterohexamer composed of biotin carboxyl carrier protein (AccB), biotin carboxylase (AccC) and two subunits each of ACCase subunit alpha (AccA) and ACCase subunit beta (AccD). Requires Zn(2+) as cofactor.

The protein resides in the cytoplasm. The enzyme catalyses N(6)-carboxybiotinyl-L-lysyl-[protein] + acetyl-CoA = N(6)-biotinyl-L-lysyl-[protein] + malonyl-CoA. It participates in lipid metabolism; malonyl-CoA biosynthesis; malonyl-CoA from acetyl-CoA: step 1/1. Functionally, component of the acetyl coenzyme A carboxylase (ACC) complex. Biotin carboxylase (BC) catalyzes the carboxylation of biotin on its carrier protein (BCCP) and then the CO(2) group is transferred by the transcarboxylase to acetyl-CoA to form malonyl-CoA. This is Acetyl-coenzyme A carboxylase carboxyl transferase subunit beta from Bacillus anthracis (strain A0248).